A 377-amino-acid chain; its full sequence is Chaperone protein DnaJ (377 aa).

Positions 5 to 69 (DYYEVLGVSK…NKRANYDQFG (65 aa)) constitute a J domain. A CR-type zinc finger spans residues 134–216 (GTEKEISIRK…CHGKGTETKN (83 aa)). Positions 147, 150, 164, 167, 190, 193, 204, and 207 each coordinate Zn(2+). CXXCXGXG motif repeat units lie at residues 147–154 (CETCDGSG), 164–171 (CHYCNGSG), 190–197 (CPVCNGTG), and 204–211 (CPTCHGKG).

Belongs to the DnaJ family. As to quaternary structure, homodimer. It depends on Zn(2+) as a cofactor.

The protein localises to the cytoplasm. Functionally, participates actively in the response to hyperosmotic and heat shock by preventing the aggregation of stress-denatured proteins and by disaggregating proteins, also in an autonomous, DnaK-independent fashion. Unfolded proteins bind initially to DnaJ; upon interaction with the DnaJ-bound protein, DnaK hydrolyzes its bound ATP, resulting in the formation of a stable complex. GrpE releases ADP from DnaK; ATP binding to DnaK triggers the release of the substrate protein, thus completing the reaction cycle. Several rounds of ATP-dependent interactions between DnaJ, DnaK and GrpE are required for fully efficient folding. Also involved, together with DnaK and GrpE, in the DNA replication of plasmids through activation of initiation proteins. This is Chaperone protein DnaJ from Staphylococcus carnosus (strain TM300).